The sequence spans 413 residues: MIQVLLVTICLAAFPYQGSSIILESGKVNDYEVVYPQRLAPLPEGAVQQKYEDTMQYEFKVNGEPVVLHLEKNKGLFSKDYSEIHYSPDGRRITTHPLVEDHCYYRGHIRNDADSTASISACHGLKGHFKLRGETYLIEPMKISNSEAHAVYKYENVEKEDEAHKMCGVTQNWESYEPIKKASQLIVSTEFQRYMEIVIVVDHSMVKKYNGDSDKIKAWVYEMINTITESYSYLYIDIILSGLEIWSEKDLINVETSAENTLKSFGEWRAKDLIHRISHDNAQLLTATDFDGPTIGLAYVASMCDPKRSVGVVQDHSSVNRLVAITLAHEMAHNLGVRHDEGSCSCGSGYTCIMSPVINSEVIKYFSDCSYIQCREYISKENPPCILNKPLRTDTVSTPVSGNELLEAEKDYD.

The first 20 residues, 1-20 (MIQVLLVTICLAAFPYQGSS), serve as a signal peptide directing secretion. Positions 21–189 (IILESGKVND…KKASQLIVST (169 aa)) are excised as a propeptide. One can recognise a Peptidase M12B domain in the interval 193-390 (RYMEIVIVVD…ENPPCILNKP (198 aa)). Glu196 and Asp280 together coordinate Ca(2+). Intrachain disulfides connect Cys304-Cys385, Cys344-Cys369, and Cys346-Cys352. Zn(2+) is bound at residue His329. Glu330 is an active-site residue. Positions 333 and 339 each coordinate Zn(2+). Positions 385, 388, 400, 403, 405, 407, and 413 each coordinate Ca(2+). Positions 391–413 (LRTDTVSTPVSGNELLEAEKDYD) are excised as a propeptide.

The protein belongs to the venom metalloproteinase (M12B) family. P-I subfamily. In terms of assembly, monomer. Zn(2+) serves as cofactor. As to expression, expressed by the venom gland.

It localises to the secreted. Functionally, snake venom zinc metalloprotease that may activate prothrombin. This chain is Snake venom metalloproteinase AaPA, found in Deinagkistrodon acutus (Hundred-pace snake).